The primary structure comprises 761 residues: Phosphoribosylformylglycinamidine synthase subunit PurL (761 aa).

The span at 1–13 shows a compositional bias: polar residues; it reads MTSRVDTVDNAAS. A disordered region spans residues 1–23; sequence MTSRVDTVDNAASTPDHPQPFAE. H57 is a catalytic residue. Y60 and K104 together coordinate ATP. Position 106 (E106) interacts with Mg(2+). Residues 107-110 and R129 each bind substrate; that span reads SHNH. H108 serves as the catalytic Proton acceptor. D130 is a Mg(2+) binding site. Position 259 (Q259) interacts with substrate. Residue D287 participates in Mg(2+) binding. Position 331-333 (331-333) interacts with substrate; the sequence is ESQ. Positions 519 and 556 each coordinate ATP. N557 contributes to the Mg(2+) binding site. A substrate-binding site is contributed by S559.

Belongs to the FGAMS family. Monomer. Part of the FGAM synthase complex composed of 1 PurL, 1 PurQ and 2 PurS subunits.

The protein localises to the cytoplasm. The enzyme catalyses N(2)-formyl-N(1)-(5-phospho-beta-D-ribosyl)glycinamide + L-glutamine + ATP + H2O = 2-formamido-N(1)-(5-O-phospho-beta-D-ribosyl)acetamidine + L-glutamate + ADP + phosphate + H(+). The protein operates within purine metabolism; IMP biosynthesis via de novo pathway; 5-amino-1-(5-phospho-D-ribosyl)imidazole from N(2)-formyl-N(1)-(5-phospho-D-ribosyl)glycinamide: step 1/2. In terms of biological role, part of the phosphoribosylformylglycinamidine synthase complex involved in the purines biosynthetic pathway. Catalyzes the ATP-dependent conversion of formylglycinamide ribonucleotide (FGAR) and glutamine to yield formylglycinamidine ribonucleotide (FGAM) and glutamate. The FGAM synthase complex is composed of three subunits. PurQ produces an ammonia molecule by converting glutamine to glutamate. PurL transfers the ammonia molecule to FGAR to form FGAM in an ATP-dependent manner. PurS interacts with PurQ and PurL and is thought to assist in the transfer of the ammonia molecule from PurQ to PurL. The polypeptide is Phosphoribosylformylglycinamidine synthase subunit PurL (Mycobacteroides abscessus (strain ATCC 19977 / DSM 44196 / CCUG 20993 / CIP 104536 / JCM 13569 / NCTC 13031 / TMC 1543 / L948) (Mycobacterium abscessus)).